The following is a 498-amino-acid chain: Glycerol kinase (498 aa).

Residue Thr13 coordinates ADP. ATP-binding residues include Thr13, Thr14, and Ser15. Thr13 provides a ligand contact to sn-glycerol 3-phosphate. Arg17 provides a ligand contact to ADP. Sn-glycerol 3-phosphate contacts are provided by Arg83, Glu84, Tyr135, and Asp244. The glycerol site is built by Arg83, Glu84, Tyr135, Asp244, and Gln245. ADP contacts are provided by Thr266 and Gly309. ATP-binding residues include Thr266, Gly309, Gln313, and Gly410. Residues Gly410 and Asn414 each contribute to the ADP site.

The protein belongs to the FGGY kinase family. As to quaternary structure, homotetramer and homodimer (in equilibrium).

The catalysed reaction is glycerol + ATP = sn-glycerol 3-phosphate + ADP + H(+). The protein operates within polyol metabolism; glycerol degradation via glycerol kinase pathway; sn-glycerol 3-phosphate from glycerol: step 1/1. Activated by phosphorylation and inhibited by fructose 1,6-bisphosphate (FBP). Its function is as follows. Key enzyme in the regulation of glycerol uptake and metabolism. Catalyzes the phosphorylation of glycerol to yield sn-glycerol 3-phosphate. This chain is Glycerol kinase, found in Symbiobacterium thermophilum (strain DSM 24528 / JCM 14929 / IAM 14863 / T).